The chain runs to 145 residues: Hemoglobin subunit beta (145 aa).

The region spanning 1–145 (MLTAEEKAAV…VANALAHRYH (145 aa)) is the Globin domain. At T11 the chain carries Phosphothreonine. Residue K58 is modified to N6-acetyllysine. H62 serves as a coordination point for heme b. At K81 the chain carries N6-acetyllysine. H91 provides a ligand contact to heme b. C92 is subject to S-nitrosocysteine.

This sequence belongs to the globin family. In terms of assembly, heterotetramer of two alpha chains and two beta chains. Red blood cells.

Functionally, involved in oxygen transport from the lung to the various peripheral tissues. In Alces alces alces (European moose), this protein is Hemoglobin subunit beta (HBB).